Reading from the N-terminus, the 240-residue chain is Uridylate kinase (240 aa).

12–15 (KLSG) contacts ATP. Residues 20-25 (GEQGFG) form an involved in allosteric activation by GTP region. Gly54 is a binding site for UMP. ATP-binding residues include Gly55 and Arg59. UMP-binding positions include Asp74 and 135-142 (TGNPYFST). Asn163, Tyr169, and Asp172 together coordinate ATP.

Belongs to the UMP kinase family. In terms of assembly, homohexamer.

It is found in the cytoplasm. It carries out the reaction UMP + ATP = UDP + ADP. The protein operates within pyrimidine metabolism; CTP biosynthesis via de novo pathway; UDP from UMP (UMPK route): step 1/1. Its activity is regulated as follows. Allosterically activated by GTP. Inhibited by UTP. In terms of biological role, catalyzes the reversible phosphorylation of UMP to UDP. This is Uridylate kinase from Bacillus cereus (strain ATCC 14579 / DSM 31 / CCUG 7414 / JCM 2152 / NBRC 15305 / NCIMB 9373 / NCTC 2599 / NRRL B-3711).